We begin with the raw amino-acid sequence, 312 residues long: DNA-directed RNA polymerase subunit alpha (312 aa).

Residues 1-226 (MIEFEKPKIT…DHLNLFVDLS (226 aa)) form an alpha N-terminal domain (alpha-NTD) region. Residues 243-312 (TERVLDKIIE…ELGLSLKKRK (70 aa)) form an alpha C-terminal domain (alpha-CTD) region.

It belongs to the RNA polymerase alpha chain family. In terms of assembly, homodimer. The RNAP catalytic core consists of 2 alpha, 1 beta, 1 beta' and 1 omega subunit. When a sigma factor is associated with the core the holoenzyme is formed, which can initiate transcription.

The enzyme catalyses RNA(n) + a ribonucleoside 5'-triphosphate = RNA(n+1) + diphosphate. Its function is as follows. DNA-dependent RNA polymerase catalyzes the transcription of DNA into RNA using the four ribonucleoside triphosphates as substrates. In Lactococcus lactis subsp. cremoris (strain SK11), this protein is DNA-directed RNA polymerase subunit alpha.